We begin with the raw amino-acid sequence, 304 residues long: E3 ubiquitin-protein ligase RNF115 (304 aa).

A2 is modified (N-acetylalanine). The segment at 95 to 138 (PLDQDNRANERGHQTHTDFWGARPPRLPLGRRYRSRGSSRPDRS) is disordered. A compositionally biased stretch (basic and acidic residues) spans 98–110 (QDNRANERGHQTH). 2 positions are modified to phosphoserine; by PKB/AKT1: S132 and S133. The RING-type zinc finger occupies 228 to 269 (CPVCKEDYTVEEEVRQLPCNHFFHSSCIVPWLELHDTCPVCR). The segment at 272–304 (LNGEDSTRQSQSTEASASNRFSNDSQLHDRWTF) is disordered. Over residues 279 to 296 (RQSQSTEASASNRFSNDS) the composition is skewed to polar residues.

Interacts with RAB7A. Interacts with EGFR and FLT3. Interacts with BST2. Interacts with STX17. Interacts with YWHAE. Phosphorylated by AKT1, allowing association with the 14-3-3 chaperones that facilitates associating with TLRs. Post-translationally, RING-type zinc finger-dependent and E2-dependent autoubiquitination. In terms of processing, deubiquitinated by USP9X; antogonizing its autoubiquitination and subsequent proteasomal degradation. Expressed at extremely low levels in normal breast, prostate, lung, colon. Higher levels of expression are detected in heart, skeletal muscle, testis as well as in breast and prostate cancer cells.

The protein resides in the cytoplasm. Its subcellular location is the nucleus. It localises to the endoplasmic reticulum. The protein localises to the golgi apparatus. It catalyses the reaction S-ubiquitinyl-[E2 ubiquitin-conjugating enzyme]-L-cysteine + [acceptor protein]-L-lysine = [E2 ubiquitin-conjugating enzyme]-L-cysteine + N(6)-ubiquitinyl-[acceptor protein]-L-lysine.. Its pathway is protein modification; protein ubiquitination. In terms of biological role, E3 ubiquitin-protein ligase that catalyzes the 'Lys-48'- and/or 'Lys-63'-linked polyubiquitination of various substrates and thereby plays a role in a number of signaling pathways including autophagy, innate immunity, cell proliferation and cell death. Plays a role in the endosomal trafficking and degradation of membrane receptors including EGFR, FLT3, MET and CXCR4 through their polyubiquitination. Participates together with BST2 in antiviral immunity by facilitating the internalization of HIV-1 virions into intracellular vesicles leading to their lysosomal degradation. Also possesses an antiviral activity independently of BST2 by promoting retroviral GAG proteins ubiquitination, redistribution to endo-lysosomal compartments and, ultimately, lysosomal degradation. Catalyzes distinct types of ubiquitination on MAVS and STING1 at different phases of viral infection to promote innate antiviral response. Mediates the 'Lys-48'-linked ubiquitination of MAVS leading to its proteasomal degradation and ubiquitinates STING1 via 'Lys-63'-linked polyubiquitination, critical for its oligomerization and the subsequent recruitment of TBK1. Plays a positive role in the autophagosome-lysosome fusion by interacting with STX17 and enhancing its stability without affecting 'Lys-48'- or 'Lys-63'-linked polyubiquitination levels, which in turn promotes autophagosome maturation. Negatively regulates TLR-induced expression of proinflammatory cytokines by catalyzing 'Lys-11'-linked ubiquitination of RAB1A and RAB13 to inhibit post-ER trafficking of TLRs to the Golgi by RAB1A and subsequently from the Golgi apparatus to the cell surface by RAB13. This chain is E3 ubiquitin-protein ligase RNF115, found in Homo sapiens (Human).